Consider the following 314-residue polypeptide: Ribosomal RNA small subunit methyltransferase H (314 aa).

S-adenosyl-L-methionine contacts are provided by residues 35 to 37, Asp-54, Phe-83, Asp-104, and Gln-111; that span reads GGH.

It belongs to the methyltransferase superfamily. RsmH family.

Its subcellular location is the cytoplasm. The catalysed reaction is cytidine(1402) in 16S rRNA + S-adenosyl-L-methionine = N(4)-methylcytidine(1402) in 16S rRNA + S-adenosyl-L-homocysteine + H(+). Its function is as follows. Specifically methylates the N4 position of cytidine in position 1402 (C1402) of 16S rRNA. In Oenococcus oeni (strain ATCC BAA-331 / PSU-1), this protein is Ribosomal RNA small subunit methyltransferase H.